The sequence spans 1888 residues: Fatty acid synthase subunit alpha (1888 aa).

A disordered region spans residues 98–118 (DLAPVEEPNAEEQTGAAATPA). The 76-residue stretch at 146–221 (VKASLLLHVL…ETFQDTFAGS (76 aa)) folds into the Carrier domain. Serine 181 bears the O-(pantetheine 4'-phosphoryl)serine mark. Residues 675–874 (DKYVLITGAG…CGAIIGWTRG (200 aa)) are beta-ketoacyl reductase. The region spanning 1119–1657 (KQMIQEVVIE…QKGAQAVAVH (539 aa)) is the Ketosynthase family 3 (KS3) domain. Catalysis depends on for beta-ketoacyl synthase activity residues cysteine 1305, histidine 1542, and histidine 1583. Mg(2+) is bound by residues aspartate 1774, valine 1775, and glutamate 1776. Residues 1774–1776 (DVE), tyrosine 1800, serine 1810, 1819–1829 (EAVFKSLGVKS), 1843–1846 (REAG), and 1873–1875 (ISH) contribute to the acetyl-CoA site. Residues serine 1874 and histidine 1875 each coordinate Mg(2+).

The protein belongs to the thiolase-like superfamily. Fungal fatty acid synthetase subunit alpha family. As to quaternary structure, fatty acid synthase is composed of alpha and beta subunits.

It carries out the reaction acetyl-CoA + n malonyl-CoA + 2n NADPH + 4n H(+) = a long-chain-acyl-CoA + n CoA + n CO2 + 2n NADP(+).. The enzyme catalyses a fatty acyl-[ACP] + malonyl-[ACP] + H(+) = a 3-oxoacyl-[ACP] + holo-[ACP] + CO2. It catalyses the reaction a (3R)-hydroxyacyl-[ACP] + NADP(+) = a 3-oxoacyl-[ACP] + NADPH + H(+). In terms of biological role, fatty acid synthetase catalyzes the formation of long-chain fatty acids from acetyl-CoA, malonyl-CoA and NADPH. The alpha subunit contains domains for: acyl carrier protein, 3-oxoacyl-[acyl-carrier-protein] reductase, and 3-oxoacyl-[acyl-carrier-protein] synthase. In this species, higher amounts of C18 than C16 fatty acids are produced. The sequence is that of Fatty acid synthase subunit alpha (FAS2) from Lachancea kluyveri (Yeast).